The primary structure comprises 167 residues: Ureidoglycolate lyase (167 aa).

It belongs to the ureidoglycolate lyase family. Homodimer. Ni(2+) is required as a cofactor.

The enzyme catalyses (S)-ureidoglycolate = urea + glyoxylate. The protein operates within nitrogen metabolism; (S)-allantoin degradation. Its function is as follows. Catalyzes the catabolism of the allantoin degradation intermediate (S)-ureidoglycolate, generating urea and glyoxylate. Involved in the utilization of allantoin as nitrogen source. This chain is Ureidoglycolate lyase, found in Pseudomonas fluorescens (strain ATCC BAA-477 / NRRL B-23932 / Pf-5).